The sequence spans 75 residues: MAKSTIFAIFMIVFVLGMVTKETKGQEMCRDLLMRAKNCDDSTCATLCKQKWKGNGSCFPNVYRKSCLCTFPCKT.

The first 25 residues, 1–25 (MAKSTIFAIFMIVFVLGMVTKETKG), serve as a signal peptide directing secretion. Disulfide bonds link Cys-29–Cys-73, Cys-39–Cys-58, Cys-44–Cys-67, and Cys-48–Cys-69.

This sequence belongs to the DEFL family.

It is found in the secreted. The sequence is that of Putative defensin-like protein 119 (LCR53) from Arabidopsis thaliana (Mouse-ear cress).